A 150-amino-acid chain; its full sequence is Phosphopantetheine adenylyltransferase (150 aa).

Thr-9 provides a ligand contact to substrate. ATP-binding positions include 9–10 (TF) and His-17. Residues Lys-41, Thr-73, and Arg-87 each contribute to the substrate site. ATP contacts are provided by residues 88 to 90 (GIR), Glu-98, and 122 to 128 (LTCVSST).

This sequence belongs to the bacterial CoaD family. As to quaternary structure, homohexamer. Requires Mg(2+) as cofactor.

Its subcellular location is the cytoplasm. The catalysed reaction is (R)-4'-phosphopantetheine + ATP + H(+) = 3'-dephospho-CoA + diphosphate. It functions in the pathway cofactor biosynthesis; coenzyme A biosynthesis; CoA from (R)-pantothenate: step 4/5. Reversibly transfers an adenylyl group from ATP to 4'-phosphopantetheine, yielding dephospho-CoA (dPCoA) and pyrophosphate. The polypeptide is Phosphopantetheine adenylyltransferase (Bacteroides fragilis (strain ATCC 25285 / DSM 2151 / CCUG 4856 / JCM 11019 / LMG 10263 / NCTC 9343 / Onslow / VPI 2553 / EN-2)).